The sequence spans 284 residues: D-tagatose-1,6-bisphosphate aldolase subunit GatY (284 aa).

Catalysis depends on aspartate 82, which acts as the Proton donor. Residues histidine 83 and histidine 180 each contribute to the Zn(2+) site. Glycine 181 contributes to the dihydroxyacetone phosphate binding site. Histidine 208 is a Zn(2+) binding site. Dihydroxyacetone phosphate-binding positions include 209-211 (GAS) and 230-233 (NVAT).

Belongs to the class II fructose-bisphosphate aldolase family. TagBP aldolase GatY subfamily. As to quaternary structure, forms a complex with GatZ. It depends on Zn(2+) as a cofactor.

It catalyses the reaction D-tagatofuranose 1,6-bisphosphate = D-glyceraldehyde 3-phosphate + dihydroxyacetone phosphate. It participates in carbohydrate metabolism; D-tagatose 6-phosphate degradation; D-glyceraldehyde 3-phosphate and glycerone phosphate from D-tagatose 6-phosphate: step 2/2. Catalytic subunit of the tagatose-1,6-bisphosphate aldolase GatYZ, which catalyzes the reversible aldol condensation of dihydroxyacetone phosphate (DHAP or glycerone-phosphate) with glyceraldehyde 3-phosphate (G3P) to produce tagatose 1,6-bisphosphate (TBP). Requires GatZ subunit for full activity and stability. Is involved in the catabolism of galactitol. The protein is D-tagatose-1,6-bisphosphate aldolase subunit GatY of Klebsiella pneumoniae subsp. pneumoniae (strain ATCC 700721 / MGH 78578).